Reading from the N-terminus, the 389-residue chain is Cytochrome B translational activator CBS2 (389 aa).

The protein resides in the mitochondrion. Its function is as follows. Translational activator of cytochrome b. The cytochrome b (coB) leader RNA may represent the target sequence for CBS1 and/ or CBS2. The protein is Cytochrome B translational activator CBS2 (CBS2) of Saccharomyces cerevisiae (strain ATCC 204508 / S288c) (Baker's yeast).